A 207-amino-acid polypeptide reads, in one-letter code: Small ribosomal subunit protein uS4 (207 aa).

The region spanning 96 to 156 (SRLDNTVYRM…KKSHKQSRIR (61 aa)) is the S4 RNA-binding domain.

Belongs to the universal ribosomal protein uS4 family. Part of the 30S ribosomal subunit. Contacts protein S5. The interaction surface between S4 and S5 is involved in control of translational fidelity.

Its function is as follows. One of the primary rRNA binding proteins, it binds directly to 16S rRNA where it nucleates assembly of the body of the 30S subunit. In terms of biological role, with S5 and S12 plays an important role in translational accuracy. The polypeptide is Small ribosomal subunit protein uS4 (Blochmanniella pennsylvanica (strain BPEN)).